Here is a 440-residue protein sequence, read N- to C-terminus: Xaa-Pro dipeptidase (440 aa).

Residues Asp244, Asp255, His335, Glu380, and Glu419 each contribute to the Mn(2+) site.

The protein belongs to the peptidase M24B family. Bacterial-type prolidase subfamily. Mn(2+) is required as a cofactor.

It catalyses the reaction Xaa-L-Pro dipeptide + H2O = an L-alpha-amino acid + L-proline. In terms of biological role, splits dipeptides with a prolyl residue in the C-terminal position. This Shewanella baltica (strain OS223) protein is Xaa-Pro dipeptidase.